The chain runs to 128 residues: Aspartate 1-decarboxylase (128 aa).

Ser-25 (schiff-base intermediate with substrate; via pyruvic acid) is an active-site residue. Ser-25 bears the Pyruvic acid (Ser) mark. Thr-57 provides a ligand contact to substrate. Tyr-58 (proton donor) is an active-site residue. 73–75 (GSA) serves as a coordination point for substrate.

Belongs to the PanD family. As to quaternary structure, heterooctamer of four alpha and four beta subunits. It depends on pyruvate as a cofactor. Post-translationally, is synthesized initially as an inactive proenzyme, which is activated by self-cleavage at a specific serine bond to produce a beta-subunit with a hydroxyl group at its C-terminus and an alpha-subunit with a pyruvoyl group at its N-terminus.

The protein resides in the cytoplasm. It catalyses the reaction L-aspartate + H(+) = beta-alanine + CO2. It participates in cofactor biosynthesis; (R)-pantothenate biosynthesis; beta-alanine from L-aspartate: step 1/1. Catalyzes the pyruvoyl-dependent decarboxylation of aspartate to produce beta-alanine. This is Aspartate 1-decarboxylase from Paraburkholderia xenovorans (strain LB400).